The following is an 84-amino-acid chain: Large ribosomal subunit protein bL27 (84 aa).

The interval 1 to 25 is disordered; the sequence is MAHKKAGGSSRNGRDSNGQRRGVKR.

The protein belongs to the bacterial ribosomal protein bL27 family.

The chain is Large ribosomal subunit protein bL27 from Desulfatibacillum aliphaticivorans.